A 303-amino-acid chain; its full sequence is Porphobilinogen deaminase (303 aa).

S-(dipyrrolylmethanemethyl)cysteine is present on Cys241.

It belongs to the HMBS family. Monomer. Requires dipyrromethane as cofactor.

It carries out the reaction 4 porphobilinogen + H2O = hydroxymethylbilane + 4 NH4(+). Its pathway is porphyrin-containing compound metabolism; protoporphyrin-IX biosynthesis; coproporphyrinogen-III from 5-aminolevulinate: step 2/4. The protein operates within porphyrin-containing compound metabolism; chlorophyll biosynthesis. Its function is as follows. Tetrapolymerization of the monopyrrole PBG into the hydroxymethylbilane pre-uroporphyrinogen in several discrete steps. The chain is Porphobilinogen deaminase from Roseiflexus castenholzii (strain DSM 13941 / HLO8).